The sequence spans 911 residues: Protein translocase subunit SecA (911 aa).

ATP-binding positions include glutamine 87, 105–109 (GEGKT), and aspartate 512. The tract at residues 861-893 (APGLESEQLSEEGAEVAVASAPVRNDQKLGRNE) is disordered. Zn(2+) contacts are provided by cysteine 895, cysteine 897, cysteine 906, and histidine 907.

The protein belongs to the SecA family. In terms of assembly, monomer and homodimer. Part of the essential Sec protein translocation apparatus which comprises SecA, SecYEG and auxiliary proteins SecDF-YajC and YidC. Zn(2+) is required as a cofactor.

It localises to the cell inner membrane. Its subcellular location is the cytoplasm. It catalyses the reaction ATP + H2O + cellular proteinSide 1 = ADP + phosphate + cellular proteinSide 2.. In terms of biological role, part of the Sec protein translocase complex. Interacts with the SecYEG preprotein conducting channel. Has a central role in coupling the hydrolysis of ATP to the transfer of proteins into and across the cell membrane, serving both as a receptor for the preprotein-SecB complex and as an ATP-driven molecular motor driving the stepwise translocation of polypeptide chains across the membrane. The protein is Protein translocase subunit SecA of Pseudomonas putida (strain ATCC 700007 / DSM 6899 / JCM 31910 / BCRC 17059 / LMG 24140 / F1).